Reading from the N-terminus, the 67-residue chain is uncharacterized protein (67 aa).

Transmembrane regions (helical) follow at residues 13–32 (IACL…GFIV) and 42–64 (RLTN…TLGL).

It is found in the membrane. This is an uncharacterized protein from Saccharomyces cerevisiae (strain ATCC 204508 / S288c) (Baker's yeast).